The sequence spans 584 residues: Adenine deaminase (584 aa).

Belongs to the metallo-dependent hydrolases superfamily. Adenine deaminase family. The cofactor is Mn(2+).

It carries out the reaction adenine + H2O + H(+) = hypoxanthine + NH4(+). In Methanococcoides burtonii (strain DSM 6242 / NBRC 107633 / OCM 468 / ACE-M), this protein is Adenine deaminase.